The primary structure comprises 564 residues: Dihydroxy-acid dehydratase (564 aa).

D80 is a binding site for Mg(2+). C121 is a [2Fe-2S] cluster binding site. Positions 122 and 123 each coordinate Mg(2+). K123 bears the N6-carboxylysine mark. Residue C194 coordinates [2Fe-2S] cluster. E447 is a binding site for Mg(2+). S473 serves as the catalytic Proton acceptor.

The protein belongs to the IlvD/Edd family. In terms of assembly, homodimer. Requires [2Fe-2S] cluster as cofactor. The cofactor is Mg(2+).

The enzyme catalyses (2R)-2,3-dihydroxy-3-methylbutanoate = 3-methyl-2-oxobutanoate + H2O. The catalysed reaction is (2R,3R)-2,3-dihydroxy-3-methylpentanoate = (S)-3-methyl-2-oxopentanoate + H2O. Its pathway is amino-acid biosynthesis; L-isoleucine biosynthesis; L-isoleucine from 2-oxobutanoate: step 3/4. The protein operates within amino-acid biosynthesis; L-valine biosynthesis; L-valine from pyruvate: step 3/4. In terms of biological role, functions in the biosynthesis of branched-chain amino acids. Catalyzes the dehydration of (2R,3R)-2,3-dihydroxy-3-methylpentanoate (2,3-dihydroxy-3-methylvalerate) into 2-oxo-3-methylpentanoate (2-oxo-3-methylvalerate) and of (2R)-2,3-dihydroxy-3-methylbutanoate (2,3-dihydroxyisovalerate) into 2-oxo-3-methylbutanoate (2-oxoisovalerate), the penultimate precursor to L-isoleucine and L-valine, respectively. This Listeria monocytogenes serotype 4a (strain HCC23) protein is Dihydroxy-acid dehydratase.